The primary structure comprises 202 residues: Small ribosomal subunit protein uS4 (202 aa).

Residues 15-42 form a disordered region; it reads LGDLPGLTRKAAKRSYPPGQHGQARRKR. Residues 90-152 form the S4 RNA-binding domain; it reads SRLDNICFRL…KGSKQLAEGN (63 aa).

It belongs to the universal ribosomal protein uS4 family. As to quaternary structure, part of the 30S ribosomal subunit. Contacts protein S5. The interaction surface between S4 and S5 is involved in control of translational fidelity.

One of the primary rRNA binding proteins, it binds directly to 16S rRNA where it nucleates assembly of the body of the 30S subunit. Its function is as follows. With S5 and S12 plays an important role in translational accuracy. The protein is Small ribosomal subunit protein uS4 of Synechococcus sp. (strain CC9902).